The primary structure comprises 337 residues: D-alanine--D-alanine ligase (337 aa).

One can recognise an ATP-grasp domain in the interval 126–326; it reads KQIWISNGLS…YADLVLWLLS (201 aa). 152–207 lines the ATP pocket; the sequence is VKHLGLPLIVKPAHEGSSLGLTKVKSVEELPAAYQLAAGLDKKVIAETCIVGDELT. Mg(2+) is bound by residues Asp-279, Glu-293, and Asn-295.

This sequence belongs to the D-alanine--D-alanine ligase family. Mg(2+) serves as cofactor. It depends on Mn(2+) as a cofactor.

The protein resides in the cytoplasm. The enzyme catalyses 2 D-alanine + ATP = D-alanyl-D-alanine + ADP + phosphate + H(+). The protein operates within cell wall biogenesis; peptidoglycan biosynthesis. Functionally, cell wall formation. The chain is D-alanine--D-alanine ligase from Polynucleobacter asymbioticus (strain DSM 18221 / CIP 109841 / QLW-P1DMWA-1) (Polynucleobacter necessarius subsp. asymbioticus).